Consider the following 364-residue polypeptide: Dihydroorotate dehydrogenase (quinone) (364 aa).

Residues 62–66 and threonine 86 each bind FMN; that span reads AGFDK. A substrate-binding site is contributed by lysine 66. 111 to 115 is a binding site for substrate; that stretch reads NRMGF. FMN contacts are provided by asparagine 142 and asparagine 175. A substrate-binding site is contributed by asparagine 175. The active-site Nucleophile is the serine 178. Residue asparagine 180 coordinates substrate. FMN is bound by residues lysine 216 and threonine 244. Residue 245–246 coordinates substrate; it reads NT. Residues glycine 267, glycine 296, and 317–318 contribute to the FMN site; that span reads YT.

This sequence belongs to the dihydroorotate dehydrogenase family. Type 2 subfamily. Monomer. FMN is required as a cofactor.

It localises to the cell membrane. The catalysed reaction is (S)-dihydroorotate + a quinone = orotate + a quinol. It functions in the pathway pyrimidine metabolism; UMP biosynthesis via de novo pathway; orotate from (S)-dihydroorotate (quinone route): step 1/1. Catalyzes the conversion of dihydroorotate to orotate with quinone as electron acceptor. This chain is Dihydroorotate dehydrogenase (quinone), found in Anaeromyxobacter sp. (strain K).